The chain runs to 501 residues: MGSELKSTSPLAVKYDLSQKIMQHLDRHLIFPLLEFLSLRQTHDPKELLQAKYDLLKDTNMTDYVANLWTNLHGGHTDEDMANAFAEKRRSVLQELSELEEEVQGILGVLENPDLIAALRQDKGQNLQHLQEHYNITPERIAVLYKFAQFQYNCGNYGGASDLLYHFRAFSKDPELNASATWGKFASEILTVDWDGAMEELGKLREMVDSKSFKDSAVQLRNRTWLLHWSLFPLFNHANGCDTLCDLFFYTPYLNTIQTSCPWLLRYLTVAVVTNQNNANQKPRNPRQSYQRRMRDLVRIISQENYEYSDPVTSFISALYTEVDFEKAQHCLRECEEVLKTDFFLVSLCDHFLEGARKLLAEAYCRIHSVISVDVLANKLEMDSAQLIQLVENRNNPSVAAASNVAADQSTEDESIESTSTNVVADDLITEAETATEAEEPEPEVQFGFKAKLDGESIIIEHPTYSAFQQIIDRTKSLSFESQNLEQSLAKSISELKHATV.

The PCI domain occupies 245–423 (CDLFFYTPYL…ESIESTSTNV (179 aa)). 2 positions are modified to phosphoserine: Ser-477 and Ser-479.

Belongs to the eIF-3 subunit E family. In terms of assembly, component of the eukaryotic translation initiation factor 3 (eIF-3) complex. The eIF-3 complex appears to include tif32/eif3a, SPAC25G10.08/eif3b, tif33/eif3c, SPBC4C3.07/eif3f, tif35/eif3g and sum1/eif3i. This set of common subunits may also associate exclusively with either moe1/eif3d and int6/eif3e, or with SPAC821.05/eif3h and SPAC1751.03/eif3m. The eIF-3 complex may also include SPAC3A12.13c/eif3j. Also interacts with the proteasome via rpn501/rpn502.

The protein resides in the cytoplasm. Functionally, component of the eukaryotic translation initiation factor 3 (eIF-3) complex, which is involved in protein synthesis of a specialized repertoire of mRNAs and, together with other initiation factors, stimulates binding of mRNA and methionyl-tRNAi to the 40S ribosome. The eIF-3 complex specifically targets and initiates translation of a subset of mRNAs involved in cell proliferation (Potential). Required for maintaining the basal level of atf1 and for transcriptional activation of core environmental stress response genes (CESR genes) in response to histidine starvation. May positively regulate proteasome activity. Required for nuclear localization of the proteasome subunit rpn501/rpn502. The sequence is that of Eukaryotic translation initiation factor 3 subunit E (int6) from Schizosaccharomyces pombe (strain 972 / ATCC 24843) (Fission yeast).